The chain runs to 212 residues: ATP phosphoribosyltransferase (212 aa).

Belongs to the ATP phosphoribosyltransferase family. Short subfamily. As to quaternary structure, heteromultimer composed of HisG and HisZ subunits.

The protein localises to the cytoplasm. It catalyses the reaction 1-(5-phospho-beta-D-ribosyl)-ATP + diphosphate = 5-phospho-alpha-D-ribose 1-diphosphate + ATP. The protein operates within amino-acid biosynthesis; L-histidine biosynthesis; L-histidine from 5-phospho-alpha-D-ribose 1-diphosphate: step 1/9. In terms of biological role, catalyzes the condensation of ATP and 5-phosphoribose 1-diphosphate to form N'-(5'-phosphoribosyl)-ATP (PR-ATP). Has a crucial role in the pathway because the rate of histidine biosynthesis seems to be controlled primarily by regulation of HisG enzymatic activity. The protein is ATP phosphoribosyltransferase of Albidiferax ferrireducens (strain ATCC BAA-621 / DSM 15236 / T118) (Rhodoferax ferrireducens).